A 57-amino-acid polypeptide reads, in one-letter code: uncharacterized protein (57 aa).

Residues 1-20 (MKKLALILFMGTLVSFYADA) form the signal peptide.

This is an uncharacterized protein from Escherichia coli (strain K12).